We begin with the raw amino-acid sequence, 1199 residues long: DNA-directed RNA polymerase subunit beta (1199 aa).

Positions 1175–1199 (EEKKAHEAAAQATDGKSANSTDDKK) are disordered. Residues 1188–1199 (DGKSANSTDDKK) show a composition bias toward polar residues.

Belongs to the RNA polymerase beta chain family. In terms of assembly, the RNAP catalytic core consists of 2 alpha, 1 beta, 1 beta' and 1 omega subunit. When a sigma factor is associated with the core the holoenzyme is formed, which can initiate transcription.

It catalyses the reaction RNA(n) + a ribonucleoside 5'-triphosphate = RNA(n+1) + diphosphate. Functionally, DNA-dependent RNA polymerase catalyzes the transcription of DNA into RNA using the four ribonucleoside triphosphates as substrates. This chain is DNA-directed RNA polymerase subunit beta, found in Lacticaseibacillus casei (strain BL23) (Lactobacillus casei).